We begin with the raw amino-acid sequence, 227 residues long: Pre-hexon-linking protein VIII (227 aa).

Position 64 is a phosphothreonine; by host (T64). The propeptide occupies 112–157 (FRHRVRSPGQGITHLTIRGRGIQLNDESVSSSLGLRPDGTFQIGGA). 2 positions are modified to phosphoserine; by host: S118 and S174.

It belongs to the adenoviridae hexon-linking protein family. Interacts with the peripentonal hexons as well as the hexons in the facets. Part of a complex composed of the core-capsid bridging protein, the endosome lysis protein VI and the hexon-linking protein VIII; these interactions bridge the virus core to the capsid. In terms of processing, cleaved by the viral protease during virion maturation. May cause the middle segment to be shed from the capsid.

The protein localises to the virion. It localises to the host nucleus. Functionally, structural component of the virion that acts as a cement protein on the capsid interior and which glue the peripentonal hexons and group-of-nine hexons together. The chain is Pre-hexon-linking protein VIII from Human adenovirus C serotype 5 (HAdV-5).